A 483-amino-acid polypeptide reads, in one-letter code: Glutamyl-tRNA(Gln) amidotransferase subunit A (483 aa).

Catalysis depends on charge relay system residues Lys76 and Ser151. Catalysis depends on Ser175, which acts as the Acyl-ester intermediate.

It belongs to the amidase family. GatA subfamily. As to quaternary structure, heterotrimer of A, B and C subunits.

It carries out the reaction L-glutamyl-tRNA(Gln) + L-glutamine + ATP + H2O = L-glutaminyl-tRNA(Gln) + L-glutamate + ADP + phosphate + H(+). Its function is as follows. Allows the formation of correctly charged Gln-tRNA(Gln) through the transamidation of misacylated Glu-tRNA(Gln) in organisms which lack glutaminyl-tRNA synthetase. The reaction takes place in the presence of glutamine and ATP through an activated gamma-phospho-Glu-tRNA(Gln). This Nitrosococcus oceani (strain ATCC 19707 / BCRC 17464 / JCM 30415 / NCIMB 11848 / C-107) protein is Glutamyl-tRNA(Gln) amidotransferase subunit A.